A 211-amino-acid chain; its full sequence is Peptidyl-prolyl cis-trans isomerase FKBP14 (211 aa).

The first 19 residues, 1 to 19 (MRLFLWNAVLTLFVTSLIG), serve as a signal peptide directing secretion. Cys-38 and Cys-96 are oxidised to a cystine. One can recognise a PPIase FKBP-type domain in the interval 45–135 (GDLMLVHYEG…IFNIDLLEIR (91 aa)). An EF-hand 1 domain is found at 135–170 (RNGPRSHESFQEMDLNDDWKLSKDEVKAYLKKEFEK). Ca(2+) is bound by residues Asp-148, Asn-150, Asp-152, Lys-154, and Glu-159. N-linked (GlcNAc...) asparagine glycosylation occurs at Asn-176. Residues 179-211 (HHDALVEDIFDKEDEDKDGFISAREFTYKHDEL) enclose the EF-hand 2 domain. Residues Asp-192, Asp-194, Asp-196, Phe-198, and Glu-203 each coordinate Ca(2+). Residues 208 to 211 (HDEL) carry the Prevents secretion from ER motif.

Monomer. Homodimer. Interacts with type III, type IV and type X collagens.

The protein localises to the endoplasmic reticulum lumen. The catalysed reaction is [protein]-peptidylproline (omega=180) = [protein]-peptidylproline (omega=0). Its activity is regulated as follows. Inhibited by tacrolimus/FK506. Its function is as follows. PPIase which accelerates the folding of proteins during protein synthesis. Has a preference for substrates containing 4-hydroxylproline modifications, including type III collagen. May also target type VI and type X collagens. In Homo sapiens (Human), this protein is Peptidyl-prolyl cis-trans isomerase FKBP14 (FKBP14).